Consider the following 103-residue polypeptide: Small ribosomal subunit protein uS10 (103 aa).

Belongs to the universal ribosomal protein uS10 family. Part of the 30S ribosomal subunit.

Its function is as follows. Involved in the binding of tRNA to the ribosomes. The chain is Small ribosomal subunit protein uS10 from Helicobacter hepaticus (strain ATCC 51449 / 3B1).